A 677-amino-acid polypeptide reads, in one-letter code: DNA ligase (677 aa).

Residues 35 to 39 (DAEFD), 85 to 86 (SL), and E110 each bind NAD(+). Residue K112 is the N6-AMP-lysine intermediate of the active site. NAD(+) is bound by residues R133 and E173. The segment at 189 to 210 (QKEGGKPFANPRNAAAGSLRQK) is disordered. NAD(+)-binding residues include K289 and K313. Residues C407, C410, C426, and C432 each coordinate Zn(2+). The region spanning 596–677 (IPDQVLEGLT…FKQLLANGTV (82 aa)) is the BRCT domain.

It belongs to the NAD-dependent DNA ligase family. LigA subfamily. Mg(2+) is required as a cofactor. It depends on Mn(2+) as a cofactor.

It catalyses the reaction NAD(+) + (deoxyribonucleotide)n-3'-hydroxyl + 5'-phospho-(deoxyribonucleotide)m = (deoxyribonucleotide)n+m + AMP + beta-nicotinamide D-nucleotide.. Functionally, DNA ligase that catalyzes the formation of phosphodiester linkages between 5'-phosphoryl and 3'-hydroxyl groups in double-stranded DNA using NAD as a coenzyme and as the energy source for the reaction. It is essential for DNA replication and repair of damaged DNA. This Corynebacterium diphtheriae (strain ATCC 700971 / NCTC 13129 / Biotype gravis) protein is DNA ligase.